A 486-amino-acid polypeptide reads, in one-letter code: Cysteine--tRNA ligase (486 aa).

Cys29 lines the Zn(2+) pocket. The 'HIGH' region motif lies at 31–41 (VTVYDYCHLGH). Cys217, His242, and Glu246 together coordinate Zn(2+). Positions 274-278 (KMSKS) match the 'KMSKS' region motif. ATP is bound at residue Lys277.

The protein belongs to the class-I aminoacyl-tRNA synthetase family. Monomer. The cofactor is Zn(2+).

The protein localises to the cytoplasm. The catalysed reaction is tRNA(Cys) + L-cysteine + ATP = L-cysteinyl-tRNA(Cys) + AMP + diphosphate. The chain is Cysteine--tRNA ligase from Thermosynechococcus vestitus (strain NIES-2133 / IAM M-273 / BP-1).